Consider the following 1140-residue polypeptide: Envelopment polyprotein (1140 aa).

The first 17 residues, 1–17 (MVGWVCISLVVLATTTA), serve as a signal peptide directing secretion. At 18-489 (GLTRNLYELK…VPGLHGWATT (472 aa)) the chain is on the lumenal side. Disulfide bonds link Cys-30–Cys-155, Cys-64–Cys-161, Cys-113–Cys-132, Cys-137–Cys-142, Cys-179–Cys-189, and Cys-214–Cys-251. Residue Asn-138 is glycosylated (N-linked (GlcNAc...) asparagine; by host). Asn-351 carries an N-linked (GlcNAc...) asparagine; by host glycan. 4 disulfides stabilise this stretch: Cys-380–Cys-439, Cys-384–Cys-393, Cys-409–Cys-428, and Cys-456–Cys-479. N-linked (GlcNAc...) asparagine; by host glycosylation is present at Asn-403. A helical transmembrane segment spans residues 490–510 (ALLITFCFGWLLIPTITMIIL). At 511 to 631 (KILRLLTFSC…LGVFRYKSRC (121 aa)) the chain is on the cytoplasmic side. A binding to the ribonucleoprotein region spans residues 520–537 (CSHYSTESKFKAILERVK). 2 CCHC-type zinc fingers span residues 549-569 (CDVC…KKSC) and 574-595 (CPYC…FSIC). Binding to the ribonucleoprotein stretches follow at residues 592 to 609 (FSIC…KKSL), 596 to 607 (KLTNRFQENLKK), and 615 to 629 (KQGC…RYKS). Residues 611–638 (RPEVKQGCYRTLGVFRYKSRCYVGLVWG) form an interaction with host TRAF3 region. In terms of domain architecture, ITAM spans 615–638 (KQGCYRTLGVFRYKSRCYVGLVWG). 2 positions are modified to phosphotyrosine; by host: Tyr-619 and Tyr-632. A YxxL motif is present at residues 619 to 622 (YRTL). Residues 632 to 652 (YVGLVWGVLLTTELIVWAASA) traverse the membrane as a helical segment. The Lumenal segment spans residues 653 to 1108 (DTPLMESGWS…EWLLGILNGN (456 aa)). Cystine bridges form between Cys-739–Cys-774, Cys-743–Cys-781, Cys-755–Cys-888, Cys-769–Cys-899, Cys-784–Cys-907, Cys-810–Cys-819, Cys-827–Cys-836, and Cys-867–Cys-871. The segment at 761 to 781 (YQYETSWGCNPPDCPGVGTGC) is fusion loop. N-linked (GlcNAc...) asparagine; by host glycosylation is present at Asn-931. Disulfide bonds link Cys-973–Cys-1003, Cys-996–Cys-1048, Cys-1013–Cys-1018, Cys-1049–Cys-1054, and Cys-1088–Cys-1092. The helical transmembrane segment at 1109–1129 (WVVVAVLIVILILSILLFSFF) threads the bilayer. A binding to the ribonucleoprotein region spans residues 1125–1140 (LFSFFCPIRGRKNKSN). The Cytoplasmic segment spans residues 1130-1140 (CPIRGRKNKSN).

It belongs to the hantavirus envelope glycoprotein family. Homodimer. Homotetramer; forms heterotetrameric Gn-Gc spikes in the pre-fusion conformation. Interacts (via C-terminus) with the nucleoprotein. Interacts with host TUFM; this interaction contributes to the virus-induced degradation of mitochondria by autophagy, which leads to degradation of host MAVS and inhibition of type I interferon (IFN) responses. Interacts with host MAP1LC3B; this interaction contributes to the virus-induced degradation of mitochondria by autophagy, which leads to degradation of host MAVS and inhibition of type I interferon (IFN) responses. Interacts (via C-terminus) with host TRAF3 (via N-terminus); this interaction inhibits the formation of TRAF3-TBK1 complexes. As to quaternary structure, homodimer. Homotetramer; forms heterotetrameric Gn-Gc spikes in the pre-fusion conformation. Homotrimer; forms homotrimer in the post-fusion conformation at acidic pH. Interacts (via C-terminus) with the nucleoprotein. Envelope polyprotein precursor is quickly cleaved in vivo just after synthesis, presumably by host signal peptidase.

Its subcellular location is the virion membrane. It is found in the host cell surface. The protein localises to the host Golgi apparatus membrane. It localises to the host endoplasmic reticulum membrane. The protein resides in the host mitochondrion. Functionally, forms homotetramers with glycoprotein C at the surface of the virion. Attaches the virion to host cell receptors including integrin ITGAV/ITGB3. This attachment induces virion internalization predominantly through clathrin-dependent endocytosis. Mediates the assembly and budding of infectious virus particles through its interaction with the nucleocapsid protein and the viral genome. May dysregulate normal immune and endothelial cell responses through an ITAM motif. Translocates to mitochondria, binds to host TUFM and recruits MAP1LC3B. These interactions induce mitochondrial autophagy and therefore destruction of host MAVS leading to inhibition of type I interferon (IFN) responses. Concomitant breakdown of glycoprotein N is apparently prevented by the nucleoprotein that may inhibit Gn-stimulated autophagosome-lysosome fusion. Interacts with the viral genomic RNA. Inhibits the host RIG-I/TBK1 pathway by disrupting the formation of TBK1-TRAF3 complexes and downstream signaling responses required for IFN-beta transcription. Its function is as follows. Forms homotetramers with glycoprotein N at the surface of the virion. Attaches the virion to host cell receptors including integrin ITGAV/ITGB3. This attachment induces virion internalization predominantly through clathrin-dependent endocytosis. Class II fusion protein that promotes fusion of viral membrane with host endosomal membrane after endocytosis of the virion. This chain is Envelopment polyprotein (GP), found in Homo sapiens (Human).